A 62-amino-acid chain; its full sequence is MIIDIEIWIQLFFFNNYNNYNNNNNNNNNNNNNNNNNNNNNNNNNNNNNNNNNNNNNNKNNN.

Residues Tyr-17–Asn-62 are disordered.

This is an uncharacterized protein from Dictyostelium discoideum (Social amoeba).